The sequence spans 868 residues: DNA replication licensing factor MCM2 (868 aa).

Disordered regions lie at residues Met-1 to Glu-65 and Asn-87 to Leu-106. Residues Ser-14, Ser-16, and Ser-23 each carry the phosphoserine modification. A compositionally biased stretch (acidic residues) spans Glu-49 to Glu-65. Ser-164 and Ser-170 each carry phosphoserine. A C4-type zinc finger spans residues Cys-341 to Cys-367. One can recognise an MCM domain in the interval Ile-493 to Val-700. An ATP-binding site is contributed by Gly-543 to Ser-550. The Arginine finger signature appears at Ser-675 to Asp-678. The disordered stretch occupies residues Val-704–Glu-728.

This sequence belongs to the MCM family. In terms of assembly, component of the MCM2-7 complex. The complex forms a toroidal hexameric ring with the proposed subunit order MCM2-MCM6-MCM4-MCM7-MCM3-MCM5; loaded onto DNA, forms a head-head double hexamer.

It localises to the nucleus. The enzyme catalyses ATP + H2O = ADP + phosphate + H(+). In terms of biological role, acts as a component of the MCM2-7 complex (MCM complex) which is the putative replicative helicase essential for 'once per cell cycle' DNA replication initiation and elongation in eukaryotic cells. The active ATPase sites in the MCM2-7 ring are formed through the interaction surfaces of two neighboring subunits such that a critical structure of a conserved arginine finger motif is provided in trans relative to the ATP-binding site of the Walker A box of the adjacent subunit. The six ATPase active sites, however, are likely to contribute differentially to the complex helicase activity; specifically the MCM2-MCM5 association is proposed to be reversible and to mediate a open ring conformation which may facilitate DNA loading. Once loaded onto DNA, double hexamers can slide on dsDNA in the absence of ATPase activity. Necessary for cell growth. This is DNA replication licensing factor MCM2 (MCM2) from Saccharomyces cerevisiae (strain ATCC 204508 / S288c) (Baker's yeast).